The following is a 405-amino-acid chain: mRNA cap guanine-N(7) methyltransferase (405 aa).

The tract at residues Met1 to Leu78 is disordered. Composition is skewed to polar residues over residues Asp9–Thr18 and Lys36–Asp45. Over residues Lys58–His75 the composition is skewed to basic and acidic residues. One can recognise an mRNA cap 0 methyltransferase domain in the interval Ser97–Gln404. Asn106–Asn107 lines the mRNA pocket. Residues Lys110, Gly134, Asp156, Asp190, Gln213, and Tyr218 each contribute to the S-adenosyl-L-methionine site.

The protein belongs to the class I-like SAM-binding methyltransferase superfamily. mRNA cap 0 methyltransferase family.

It localises to the nucleus. The catalysed reaction is a 5'-end (5'-triphosphoguanosine)-ribonucleoside in mRNA + S-adenosyl-L-methionine = a 5'-end (N(7)-methyl 5'-triphosphoguanosine)-ribonucleoside in mRNA + S-adenosyl-L-homocysteine. Its function is as follows. Catalytic subunit of the mRNA-capping methyltransferase RNMT:RAMAC complex that methylates the N7 position of the added guanosine to the 5'-cap structure of mRNAs. Binds RNA containing 5'-terminal GpppC. The protein is mRNA cap guanine-N(7) methyltransferase (rnmt) of Xenopus tropicalis (Western clawed frog).